The following is a 152-amino-acid chain: UPF0266 membrane protein YobD (152 aa).

Transmembrane regions (helical) follow at residues 6 to 26 (LVLI…QFIM), 45 to 65 (IDSV…VTNH), and 67 to 87 (ALIT…IFWI).

Belongs to the UPF0266 family.

Its subcellular location is the cell inner membrane. This Escherichia coli O45:K1 (strain S88 / ExPEC) protein is UPF0266 membrane protein YobD.